The chain runs to 449 residues: Gamma conglutin 1 (449 aa).

The signal sequence occupies residues 1-33; it reads MARNMAHILHILVISLSYSFLFVSSSSQDSQSL. Positions 60 to 429 constitute a Peptidase A1 domain; sequence HWANIHKRTP…DLERSRVGFN (370 aa). Disulfide bonds link cysteine 88/cysteine 178, cysteine 102/cysteine 115, cysteine 107/cysteine 133, cysteine 118/cysteine 128, and cysteine 350/cysteine 391. The N-linked (GlcNAc...) asparagine glycan is linked to asparagine 130.

Belongs to the peptidase A1 family. Two-subunit monomeric unit made of alpha and beta subunits coupled by disulfide bonds (at pH 4.5 and under non-reducing conditions). Can also form oligomers including dimer, tetramer and cyclic hexamer (trimer of dimers) (at pH &gt; 5.5). Component of globulins complexes which accumulate in seeds. Interacts with flavonoids (e.g. apigenin glucosides) present in globulins complexes. Forms a static complex with vitexin. Post-translationally, undergoes very complex post-translational maturation; the proteolytic processing leading to the formation of two alpha and beta subunits is incomplete, leaving a certain amount of the protein in an uncut form. In terms of processing, glycosylated on alpha chain. In terms of tissue distribution, expressed in developing cotyledons and in the embryonic axis of germinating seeds. Accumulates in seeds, especially in the protein bodies of developing cotyledonary cells (at protein level). Also detected, at low levels, in plumules and radicles.

It is found in the secreted. The protein localises to the extracellular space. Functionally, sulfur-rich seed storage protein that remains undegraded at germination. The chain is Gamma conglutin 1 from Lupinus angustifolius (Narrow-leaved blue lupine).